The chain runs to 61 residues: MPYVHVELFEGRTVEQKAIIAKEITESISKHAGAPTSAIHVIFNDLPEGMLYQGGEMKKKK.

Catalysis depends on Pro2, which acts as the Proton acceptor; via imino nitrogen.

This sequence belongs to the 4-oxalocrotonate tautomerase family.

The sequence is that of Probable tautomerase LL0574 from Lactococcus lactis subsp. lactis (strain IL1403) (Streptococcus lactis).